Reading from the N-terminus, the 148-residue chain is Large ribosomal subunit protein uL13 (148 aa).

Belongs to the universal ribosomal protein uL13 family. As to quaternary structure, part of the 50S ribosomal subunit.

Functionally, this protein is one of the early assembly proteins of the 50S ribosomal subunit, although it is not seen to bind rRNA by itself. It is important during the early stages of 50S assembly. This chain is Large ribosomal subunit protein uL13, found in Sulfolobus acidocaldarius (strain ATCC 33909 / DSM 639 / JCM 8929 / NBRC 15157 / NCIMB 11770).